Consider the following 294-residue polypeptide: NAD kinase (294 aa).

Catalysis depends on Asp-74, which acts as the Proton acceptor. NAD(+)-binding positions include 74-75, 148-149, Arg-159, Arg-176, Asp-178, 189-194, and Gln-247; these read DG, ND, and TAYALS.

It belongs to the NAD kinase family. A divalent metal cation is required as a cofactor.

Its subcellular location is the cytoplasm. The enzyme catalyses NAD(+) + ATP = ADP + NADP(+) + H(+). In terms of biological role, involved in the regulation of the intracellular balance of NAD and NADP, and is a key enzyme in the biosynthesis of NADP. Catalyzes specifically the phosphorylation on 2'-hydroxyl of the adenosine moiety of NAD to yield NADP. This is NAD kinase from Azoarcus sp. (strain BH72).